The sequence spans 92 residues: UPF0250 protein COSY_0496 (92 aa).

The protein belongs to the UPF0250 family.

The sequence is that of UPF0250 protein COSY_0496 from Vesicomyosocius okutanii subsp. Calyptogena okutanii (strain HA).